We begin with the raw amino-acid sequence, 411 residues long: Dihydrolipoyllysine-residue succinyltransferase component of 2-oxoglutarate dehydrogenase complex (411 aa).

One can recognise a Lipoyl-binding domain in the interval 2 to 77 (TTEIRVPTLG…EVNALLGAVE (76 aa)). At Lys43 the chain carries N6-lipoyllysine. Low complexity predominate over residues 82 to 100 (SVAKSPSSSETSVSAAPSE). Residues 82–115 (SVAKSPSSSETSVSAAPSELEQSSSSNTMPPAPS) are disordered. The span at 101-110 (LEQSSSSNTM) shows a compositional bias: polar residues. The Peripheral subunit-binding (PSBD) domain occupies 111 to 148 (PPAPSAAKLMAENNIAKSDILGSGKRGQILKEDVLNVL). Catalysis depends on residues His382 and Asp386.

The protein belongs to the 2-oxoacid dehydrogenase family. In terms of assembly, forms a 24-polypeptide structural core with octahedral symmetry. Part of the 2-oxoglutarate dehydrogenase (OGDH) complex composed of E1 (2-oxoglutarate dehydrogenase), E2 (dihydrolipoamide succinyltransferase) and E3 (dihydrolipoamide dehydrogenase); the complex contains multiple copies of the three enzymatic components (E1, E2 and E3). It depends on (R)-lipoate as a cofactor.

It catalyses the reaction N(6)-[(R)-dihydrolipoyl]-L-lysyl-[protein] + succinyl-CoA = N(6)-[(R)-S(8)-succinyldihydrolipoyl]-L-lysyl-[protein] + CoA. It participates in amino-acid degradation; L-lysine degradation via saccharopine pathway; glutaryl-CoA from L-lysine: step 6/6. E2 component of the 2-oxoglutarate dehydrogenase (OGDH) complex which catalyzes the second step in the conversion of 2-oxoglutarate to succinyl-CoA and CO(2). This is Dihydrolipoyllysine-residue succinyltransferase component of 2-oxoglutarate dehydrogenase complex (sucB) from Bartonella vinsonii subsp. berkhoffii.